The primary structure comprises 287 residues: 4-diphosphocytidyl-2-C-methyl-D-erythritol kinase (287 aa).

Residue lysine 11 is part of the active site. 93–103 provides a ligand contact to ATP; the sequence is PFGAGLGGGSS. The active site involves aspartate 135.

It belongs to the GHMP kinase family. IspE subfamily.

It carries out the reaction 4-CDP-2-C-methyl-D-erythritol + ATP = 4-CDP-2-C-methyl-D-erythritol 2-phosphate + ADP + H(+). It functions in the pathway isoprenoid biosynthesis; isopentenyl diphosphate biosynthesis via DXP pathway; isopentenyl diphosphate from 1-deoxy-D-xylulose 5-phosphate: step 3/6. In terms of biological role, catalyzes the phosphorylation of the position 2 hydroxy group of 4-diphosphocytidyl-2C-methyl-D-erythritol. This Chlorobium luteolum (strain DSM 273 / BCRC 81028 / 2530) (Pelodictyon luteolum) protein is 4-diphosphocytidyl-2-C-methyl-D-erythritol kinase.